The following is a 147-amino-acid chain: Large ribosomal subunit protein uL15 (147 aa).

The tract at residues 1-46 (MSIRLENLSYTPGARKEKHRKGRGHAAGKGKQAGRGQSGQKKRSTV) is disordered. Over residues 16–28 (KEKHRKGRGHAAG) the composition is skewed to basic residues.

It belongs to the universal ribosomal protein uL15 family. Part of the 50S ribosomal subunit.

Functionally, binds to the 23S rRNA. In Mesomycoplasma hyopneumoniae (strain 232) (Mycoplasma hyopneumoniae), this protein is Large ribosomal subunit protein uL15.